Here is a 101-residue protein sequence, read N- to C-terminus: MSCCNPCLPCQPCGPTPLANSCNEPCVRQCQSSSVIIEPSSVVVILPGPILSSFPQNTVVGSSTSAAVGSILSCEGVPINSGGFDLSCITSRYCGSRCRPC.

Serine 2 is modified (N-acetylserine).

It belongs to the avian keratin family. In terms of assembly, the avian keratins (F-ker, S-ker, C-ker and B-ker) are a complex mixture of very similar polypeptides.

The protein is Feather keratin Cos2-2 of Columba livia (Rock dove).